Reading from the N-terminus, the 63-residue chain is DNA-directed RNA polymerase 7 kDa subunit (63 aa).

This sequence belongs to the poxviridae DNA-directed RNA polymerase 7 kDa subunit family. In terms of assembly, the DNA-dependent RNA polymerase used for intermediate and late genes expression consists of eight subunits 147 kDa, 133 kDa, 35 kDa, 30 kDa, 22 kDa, 19 kDa, 18 kDa and 7 kDa totalling more than 500 kDa in mass. The same holoenzyme, with the addition of the transcription-specificity factor RAP94, is used for early gene expression.

It is found in the virion. The enzyme catalyses RNA(n) + a ribonucleoside 5'-triphosphate = RNA(n+1) + diphosphate. Its function is as follows. Part of the DNA-dependent RNA polymerase which catalyzes the transcription of viral DNA into RNA using the four ribonucleoside triphosphates as substrates. Responsible for the transcription of early, intermediate and late genes. DNA-dependent RNA polymerase associates with the early transcription factor (ETF) thereby allowing the early genes transcription. Late transcription, and probably also intermediate transcription, require newly synthesized RNA polymerase. This Myxoma virus (strain Lausanne) (MYXV) protein is DNA-directed RNA polymerase 7 kDa subunit (RPO7).